Reading from the N-terminus, the 34-residue chain is Antimicrobial peptide Alo-2 (34 aa).

Cystine bridges form between Cys-1–Cys-18, Cys-8–Cys-22, and Cys-17–Cys-33.

The protein localises to the secreted. In terms of biological role, has antifungal activity against C.glabrata. This Acrocinus longimanus (Giant harlequin beetle) protein is Antimicrobial peptide Alo-2.